Reading from the N-terminus, the 347-residue chain is Probable G-protein coupled receptor 148 (347 aa).

The Extracellular portion of the chain corresponds to 1–51 (MGDELAPCPVGTTAWPALIQLISKTPCMPQAASNTSLGLGDLRVPSSMLYW). Residue Asn-34 is glycosylated (N-linked (GlcNAc...) asparagine). Residues 52 to 72 (LFLPSSLLAAATLAVSPLLLV) form a helical membrane-spanning segment. Over 73–85 (TILRNQRLRQEPH) the chain is Cytoplasmic. Residues 86-106 (YLLPANILLSDLAYILLHMLI) traverse the membrane as a helical segment. Residues 107–130 (SSSSLGGWELGRMACGILTDAVFA) are Extracellular-facing. The helical transmembrane segment at 131-151 (ACTSTILSFTAIVLHTYLAVI) threads the bilayer. The Cytoplasmic segment spans residues 152-165 (HPLRYLSFMSHGAA). The helical transmembrane segment at 166 to 186 (WKAVALIWLVACCFPTFLIWL) threads the bilayer. The Extracellular portion of the chain corresponds to 187–214 (SKWQDAQLEEQGASYILPPSMGTQPGCG). Residues 215 to 235 (LLVIVTYTSILCVLFLCTALI) form a helical membrane-spanning segment. Over 236 to 261 (ANCFWRIYAEAKTSGIWGQGYSRARG) the chain is Cytoplasmic. The helical transmembrane segment at 262-282 (TLLIHSVLITLYVSTGVVFSL) threads the bilayer. Residues 283-299 (DMVLTRYHHIDSGTHTW) lie on the Extracellular side of the membrane. Residues 300–322 (LLAANSEVLMMLPRAMLTYLYLL) traverse the membrane as a helical segment. Residues 323–347 (RYRQLLGMVRGHLPSRRHQAIFTIS) are Cytoplasmic-facing.

This sequence belongs to the G-protein coupled receptor 1 family. Expression restricted to nervous system and testis. Is also detected in several tumors types, most notably prostate cancer.

The protein resides in the cell membrane. Its function is as follows. Orphan receptor. The chain is Probable G-protein coupled receptor 148 (GPR148) from Homo sapiens (Human).